The primary structure comprises 132 residues: Ribosome-binding factor A (132 aa).

Belongs to the RbfA family. Monomer. Binds 30S ribosomal subunits, but not 50S ribosomal subunits or 70S ribosomes.

The protein resides in the cytoplasm. In terms of biological role, one of several proteins that assist in the late maturation steps of the functional core of the 30S ribosomal subunit. Associates with free 30S ribosomal subunits (but not with 30S subunits that are part of 70S ribosomes or polysomes). Required for efficient processing of 16S rRNA. May interact with the 5'-terminal helix region of 16S rRNA. In Teredinibacter turnerae (strain ATCC 39867 / T7901), this protein is Ribosome-binding factor A.